Here is a 180-residue protein sequence, read N- to C-terminus: Adenine phosphoribosyltransferase (180 aa).

An N-acetylalanine modification is found at alanine 2. A phosphoserine mark is found at serine 4, serine 15, and serine 30. A Phosphotyrosine modification is found at tyrosine 60. Serine 66 bears the Phosphoserine mark. Lysine 114 carries the N6-acetyllysine modification. Threonine 135 bears the Phosphothreonine mark.

This sequence belongs to the purine/pyrimidine phosphoribosyltransferase family. As to quaternary structure, homodimer.

The protein resides in the cytoplasm. It carries out the reaction AMP + diphosphate = 5-phospho-alpha-D-ribose 1-diphosphate + adenine. The protein operates within purine metabolism; AMP biosynthesis via salvage pathway; AMP from adenine: step 1/1. Its function is as follows. Catalyzes a salvage reaction resulting in the formation of AMP, that is energically less costly than de novo synthesis. This Homo sapiens (Human) protein is Adenine phosphoribosyltransferase.